A 119-amino-acid chain; its full sequence is Large ribosomal subunit protein P3 (119 aa).

The segment at 81-119 (GAAAGAASGGAAAEAPKAEEKKEEEKEESEDDLGFSLFD) is disordered. A compositionally biased stretch (low complexity) spans 84-95 (AGAASGGAAAEA).

This sequence belongs to the eukaryotic ribosomal protein P1/P2 family. Phosphorylated.

Its function is as follows. Plays an important role in the elongation step of protein synthesis. This Oryza sativa subsp. japonica (Rice) protein is Large ribosomal subunit protein P3.